Here is a 576-residue protein sequence, read N- to C-terminus: Nuclear protein localization protein 4 homolog (576 aa).

Disordered stretches follow at residues 67-96 (LHLVGNNNNNNNDNKASSGSNNNNNNNNIS) and 200-219 (QDDNEEDNKDNKDNSEIKKS). The span at 72–94 (NNNNNNNDNKASSGSNNNNNNNN) shows a compositional bias: low complexity. Residues 208–218 (KDNKDNSEIKK) show a composition bias toward basic and acidic residues. An MPN domain is found at 295-430 (GALVDFQSAN…MEAFQVSDQA (136 aa)).

This sequence belongs to the NPL4 family.

It functions in the pathway protein degradation; proteasomal ubiquitin-dependent pathway. In terms of biological role, may be part of a complex that binds ubiquitinated proteins and that is necessary for the export of misfolded proteins from the ER to the cytoplasm, where they are degraded by the proteasome. The protein is Nuclear protein localization protein 4 homolog (nploc4) of Dictyostelium discoideum (Social amoeba).